A 175-amino-acid polypeptide reads, in one-letter code: MALREIIILPDKRLREISKPVAEVTPEIRKLADDMFESMYDAPGIGLAAIQIAEPVRLITMDIVRKEGNGKSDPRAFINPEIVGASAEMNVYEEGCLSIPEYYADVERPAVVRIRYTDLDGNVKEEDADGLFATCIQHEIDHLDGVLFVDHLSKLKRAMVVRKFEKAAKRGIKYV.

Fe cation contacts are provided by C96 and H138. The active site involves E139. Fe cation is bound at residue H142.

Belongs to the polypeptide deformylase family. Fe(2+) is required as a cofactor.

The enzyme catalyses N-terminal N-formyl-L-methionyl-[peptide] + H2O = N-terminal L-methionyl-[peptide] + formate. In terms of biological role, removes the formyl group from the N-terminal Met of newly synthesized proteins. Requires at least a dipeptide for an efficient rate of reaction. N-terminal L-methionine is a prerequisite for activity but the enzyme has broad specificity at other positions. The chain is Peptide deformylase from Rhodopseudomonas palustris (strain BisB5).